The sequence spans 120 residues: Nitrogenase-stabilizing/protective protein NifW (120 aa).

It belongs to the NifW family. In terms of assembly, homotrimer; associates with NifD.

In terms of biological role, may protect the nitrogenase Fe-Mo protein from oxidative damage. The chain is Nitrogenase-stabilizing/protective protein NifW from Rhodospirillum rubrum (strain ATCC 11170 / ATH 1.1.1 / DSM 467 / LMG 4362 / NCIMB 8255 / S1).